The sequence spans 352 residues: rRNA 2'-O-methyltransferase fibrillarin (352 aa).

Residues 1-115 (MGRPEFNRGG…GGAGGMRGGK (115 aa)) are disordered. Asymmetric dimethylarginine is present on residues Arg-8, Arg-16, Arg-19, Arg-23, Arg-27, Arg-35, Arg-43, Arg-51, Arg-55, Arg-58, Arg-63, Arg-67, Arg-70, Arg-75, Arg-81, Arg-85, Arg-91, Arg-95, Arg-98, Arg-102, Arg-105, and Arg-112. Over residues 8-18 (RGGGGGGFRGG) the composition is skewed to gly residues. The span at 26-59 (SRGGFGGGGRGGYGGGDRGSFGGGDRGGFRGGRG) shows a compositional bias: gly residues. Positions 66–113 (FRGGRGGGDRGGFGGRGSPRGGFGGRGSPRGGRGSPRGGRGGAGGMRG) are enriched in gly residues. S-adenosyl-L-methionine-binding positions include 203–204 (TT), 222–223 (EF), 247–248 (DA), and 267–270 (DVAQ).

The protein belongs to the methyltransferase superfamily. Fibrillarin family. Component of box C/D small nucleolar ribonucleoprotein (snoRNP) particles. It is associated with the U3, U8 and U13 small nuclear RNAs. By homology to other fibrillarins, some or all of the N-terminal domain arginines are modified to asymmetric dimethylarginine (DMA).

The protein resides in the nucleus. It is found in the nucleolus. The protein localises to the nucleoplasm. The catalysed reaction is L-glutaminyl-[histone H2A] + S-adenosyl-L-methionine = N(5)-methyl-L-glutaminyl-[histone H2A] + S-adenosyl-L-homocysteine + H(+). S-adenosyl-L-methionine-dependent methyltransferase that has the ability to methylate both RNAs and proteins. Involved in pre-rRNA processing. Utilizes the methyl donor S-adenosyl-L-methionine to catalyze the site-specific 2'-hydroxyl methylation of ribose moieties in pre-ribosomal RNA. Site specificity is provided by a guide RNA that base pairs with the substrate. Methylation occurs at a characteristic distance from the sequence involved in base pairing with the guide RNA. Also acts as a protein methyltransferase by mediating methylation of 'Gln-105' of histone H2A (H2AQ105me), a modification that impairs binding of the FACT complex and is specifically present at 35S ribosomal DNA locus. Plays a role in modulation of nucleolus size most likely through regulating the ribosomal RNA (rRNA) pool. This Caenorhabditis elegans protein is rRNA 2'-O-methyltransferase fibrillarin.